Reading from the N-terminus, the 313-residue chain is 3'-5' exoribonuclease YhaM (313 aa).

Residues 163–279 (HVVSMLRLAK…LHQIDLMDAS (117 aa)) enclose the HD domain.

This sequence belongs to the YhaM family.

Its function is as follows. Shows a 3'-5' exoribonuclease activity. The chain is 3'-5' exoribonuclease YhaM from Listeria welshimeri serovar 6b (strain ATCC 35897 / DSM 20650 / CCUG 15529 / CIP 8149 / NCTC 11857 / SLCC 5334 / V8).